Consider the following 60-residue polypeptide: Three-finger toxin MS3 (60 aa).

Cystine bridges form between C3–C22, C15–C39, C41–C52, and C53–C58.

It belongs to the three-finger toxin family. Short-chain subfamily. Type I alpha-neurotoxin sub-subfamily. In terms of tissue distribution, expressed by the venom gland.

It is found in the secreted. Functionally, produces peripheral paralysis by blocking neuromuscular transmission at the postsynaptic site. Binds to and inhibits the endogenous nicotinic acetylcholine receptors (nAChR) in human rhabdomyosarcoma TE 671 cell line with an IC(50) of 346 mM. This neurotoxin is lethal to mice by intraperitoneal injection and to zebrafish by injection at the back of the dorsolateral region. The chain is Three-finger toxin MS3 from Micrurus surinamensis (Surinam coral snake).